The chain runs to 1050 residues: Transcription intermediary factor 1-alpha (1050 aa).

Lys7 participates in a covalent cross-link: Glycyl lysine isopeptide (Lys-Gly) (interchain with G-Cter in SUMO2). Over residues 15-30 the composition is skewed to low complexity; the sequence is ASAAASGGPSAAPSGE. The disordered stretch occupies residues 15–44; it reads ASAAASGGPSAAPSGENEAESRQGPDSERG. The span at 33 to 44 shows a compositional bias: basic and acidic residues; that stretch reads AESRQGPDSERG. The RING-type zinc finger occupies 56 to 82; the sequence is CAVCHQNIQSRAPKLLPCLHSFCQRCL. At Thr101 the chain carries Phosphothreonine. A Phosphoserine modification is found at Ser110. 2 consecutive B box-type zinc fingers follow at residues 158–211 and 218–259; these read KSNQ…VSPE and QRPV…YQFI. Cys163, Cys166, Cys187, and His200 together coordinate Zn(2+). Residue Lys205 forms a Glycyl lysine isopeptide (Lys-Gly) (interchain with G-Cter in SUMO2) linkage. Zn(2+)-binding residues include Cys223, His226, Cys246, and His251. A Glycyl lysine isopeptide (Lys-Gly) (interchain with G-Cter in SUMO2) cross-link involves residue Lys276. A coiled-coil region spans residues 289–359; that stretch reads NQIQNRIIEV…AGLSKQLEHV (71 aa). A disordered region spans residues 429–456; the sequence is ESQPQMPKQNPVVEQNSQPPSGLSSNQL. Residues 431–456 show a composition bias toward polar residues; sequence QPQMPKQNPVVEQNSQPPSGLSSNQL. Glycyl lysine isopeptide (Lys-Gly) (interchain with G-Cter in SUMO2) cross-links involve residues Lys436 and Lys458. The residue at position 469 (Arg469) is an Omega-N-methylarginine. Low complexity-rich tracts occupy residues 476–490 and 499–510; these read QVMA…RPAP and QGPIQQPSISHQ. The segment at 476–550 is disordered; it reads QVMAQRQQVQ…PPNQNIPRQA (75 aa). The segment covering 526–535 has biased composition (pro residues); sequence PNGPVLPPHP. A Glycyl lysine isopeptide (Lys-Gly) (interchain with G-Cter in SUMO2) cross-link involves residue Lys552. The disordered stretch occupies residues 571-594; the sequence is ISSGQGTPSTTNSTSSTPSSPTIT. A compositionally biased stretch (low complexity) spans 577-594; sequence TPSTTNSTSSTPSSPTIT. Lys641 is covalently cross-linked (Glycyl lysine isopeptide (Lys-Gly) (interchain with G-Cter in SUMO2)). A disordered region spans residues 643-712; it reads TNIDHGQPRP…PAGADSTHKV (70 aa). 3 positions are modified to phosphoserine: Ser654, Ser660, and Ser667. Over residues 654-666 the composition is skewed to polar residues; the sequence is SNRTVQSPNSSVP. Residues 685-707 show a composition bias toward low complexity; the sequence is SPSASSVGSRGSSGSSSKPAGAD. Glycyl lysine isopeptide (Lys-Gly) (interchain with G-Cter in SUMO2) cross-links involve residues Lys702 and Lys711. Residue Lys723 forms a Glycyl lysine isopeptide (Lys-Gly) (interchain with G-Cter in SUMO1); alternate linkage. Residue Lys723 forms a Glycyl lysine isopeptide (Lys-Gly) (interchain with G-Cter in SUMO2); alternate linkage. Residue Lys741 forms a Glycyl lysine isopeptide (Lys-Gly) (interchain with G-Cter in SUMO2) linkage. Residue Ser744 is modified to Phosphoserine. The interval 754 to 779 is nuclear receptor binding site (NRBS); that stretch reads NYPRSILTSLLLNSSQSSTSEETVLR. A disordered region spans residues 766–824; it reads NSSQSSTSEETVLRSDAPDSTGDQPGLHQDNSSNGKSEWLDPSQKSPLHVGETRKEDDP. Ser768 carries the post-translational modification Phosphoserine; by ATM. A Glycyl lysine isopeptide (Lys-Gly) (interchain with G-Cter in SUMO2) cross-link involves residue Lys801. Ser808 bears the Phosphoserine mark. Residue Lys810 forms a Glycyl lysine isopeptide (Lys-Gly) (interchain with G-Cter in SUMO2) linkage. A Phosphoserine modification is found at Ser811. Thr818 is modified (phosphothreonine). The PHD-type zinc-finger motif lies at 826–873; that stretch reads EDWCAVCQNGGELLCCEKCPKVFHLSCHVPTLTNFPSGEWICTFCRDL. The interaction with histone H3 that is not methylated at 'Lys-4' (H3K4me0) stretch occupies residues 834-840; it reads NGGELLC. A Glycyl lysine isopeptide (Lys-Gly) (interchain with G-Cter in SUMO2) cross-link involves residue Lys875. The Nuclear localization signal signature appears at 891 to 907; sequence KKKTEGLVKLTPIDKRK. The region spanning 899–1004 is the Bromo domain; that stretch reads KLTPIDKRKC…NYFEELLKNL (106 aa). Lys949 participates in a covalent cross-link: Glycyl lysine isopeptide (Lys-Gly) (interchain with G-Cter in SUMO2). An interaction with histone H3 that is acetylated at 'Lys-23' (H3K23ac) region spans residues 979 to 980; that stretch reads FN. Residue Lys992 forms a Glycyl lysine isopeptide (Lys-Gly) (interchain with G-Cter in SUMO2) linkage. The span at 1011–1026 shows a compositional bias: basic and acidic residues; that stretch reads PKPEFRNESEDNKFSD. The interval 1011–1036 is disordered; sequence PKPEFRNESEDNKFSDDSDDDFVQPR. Ser1019, Ser1025, and Ser1028 each carry phosphoserine. A Glycyl lysine isopeptide (Lys-Gly) (interchain with G-Cter in SUMO2) cross-link involves residue Lys1041. At Ser1042 the chain carries Phosphoserine.

Interacts with CARM1, NCOA2/GRIP1, PML, KAT5/TIP60, BRD7, CBX1, CBX3 and CBX5. Part of a coactivator complex containing TRIM24, NCOA2 and CARM1. Interacts with NR3C2/MCR. Interacts with the ligand-binding domain of estrogen receptors (in vitro). Interaction with DNA-bound estrogen receptors requires the presence of estradiol. Interacts with AR and p53/TP53. Interacts (via bromo domain) with histone H3 (via N-terminus), provided that it is not methylated at 'Lys-4' (H3K4me0). Does not interact with histone H3 that is methylated at 'Lys-4' (H3K4me1, H3K4me2 or H3K4me3). Interacts (via bromo domain) with histone H3 (via N-terminus) that is acetylated at 'Lys-23' (H3K23ac). Has the highest affinity for histone H3 that is both unmodified at 'Lys-4' (H3K4me0) and acetylated at 'Lys-23' (H3K23ac). Has very low affinity for histone H3 that is methylated at 'Lys-9' (H3K9me), or acetylated at both 'Lys-9' (H3K9ac) and 'Lys-14' (H3K14ac), or acetylated at 'Lys-27' (H3K27ac) (in vitro). Interacts with TRIM16. Post-translationally, phosphorylated at Ser-768 by ATM kinase induces ubiquitination and degradation during DNA damage. Sumoylated. In terms of processing, undergoes ubiquitination-mediated degradation in response to DNA damage.

The protein localises to the nucleus. It localises to the cytoplasm. The protein resides in the mitochondrion. It catalyses the reaction S-ubiquitinyl-[E2 ubiquitin-conjugating enzyme]-L-cysteine + [acceptor protein]-L-lysine = [E2 ubiquitin-conjugating enzyme]-L-cysteine + N(6)-ubiquitinyl-[acceptor protein]-L-lysine.. It functions in the pathway protein modification; protein ubiquitination. Functionally, transcriptional coactivator that interacts with numerous nuclear receptors and coactivators and modulates the transcription of target genes. Interacts with chromatin depending on histone H3 modifications, having the highest affinity for histone H3 that is both unmodified at 'Lys-4' (H3K4me0) and acetylated at 'Lys-23' (H3K23ac). Has E3 protein-ubiquitin ligase activity. During the DNA damage response, participates in an autoregulatory feedback loop with TP53. Early in response to DNA damage, ATM kinase phosphorylates TRIM24 leading to its ubiquitination and degradation. After sufficient DNA repair has occurred, TP53 activates TRIM24 transcription, ultimately leading to TRIM24-mediated TP53 ubiquitination and degradation. Plays a role in the regulation of cell proliferation and apoptosis, at least in part via its effects on p53/TP53 levels. Up-regulates ligand-dependent transcription activation by AR, GCR/NR3C1, thyroid hormone receptor (TR) and ESR1. Modulates transcription activation by retinoic acid (RA) receptors, including RARA. Plays a role in regulating retinoic acid-dependent proliferation of hepatocytes. Also participates in innate immunity by mediating the specific 'Lys-63'-linked ubiquitination of TRAF3 leading to activation of downstream signal transduction of the type I IFN pathway. Additionally, negatively regulates NLRP3/CASP1/IL-1beta-mediated pyroptosis and cell migration probably by ubiquitinating NLRP3. This Homo sapiens (Human) protein is Transcription intermediary factor 1-alpha (TRIM24).